Reading from the N-terminus, the 90-residue chain is MNKTDLIDAIANAAELNKKQAKAALEATLDAITASLKEGEPVQLIGFGTFKVNERAARTGRNPQTGAEIQIAASKVPAFVSGKALKDAIK.

This sequence belongs to the bacterial histone-like protein family. Homodimer.

Histone-like DNA-binding protein which is capable of wrapping DNA to stabilize it, and thus to prevent its denaturation under extreme environmental conditions. In Haemophilus influenzae (strain ATCC 51907 / DSM 11121 / KW20 / Rd), this protein is DNA-binding protein HU (hup).